Consider the following 106-residue polypeptide: Protein Rev (106 aa).

Residues 8 to 16 (VIKFLYQSN) form a homomultimerization region. The tract at residues 13–36 (YQSNPPPRPEGTRQARRNRRRRWR) is disordered. The Nuclear localization signal and RNA-binding (RRE) signature appears at 24 to 40 (TRQARRNRRRRWRARQR). Positions 26–36 (QARRNRRRRWR) are enriched in basic residues. The Nuclear export signal and binding to XPO1 motif lies at 63–74 (LQLPPLERLTLD). Phosphoserine; by host is present on residues S82 and S89.

This sequence belongs to the HIV-1 REV protein family. As to quaternary structure, homomultimer; when bound to the RRE. Multimeric assembly is essential for activity and may involve XPO1. Binds to human KPNB1, XPO1, TNPO1, RANBP5 and IPO7. Interacts with the viral Integrase. Interacts with human KHDRBS1. Interacts with human NAP1; this interaction decreases Rev multimerization and stimulates its activity. Interacts with human DEAD-box helicases DDX3 and DDX24; these interactions may serve for viral RNA export to the cytoplasm and packaging, respectively. Interacts with human PSIP1; this interaction may inhibit HIV-1 DNA integration by promoting dissociation of the Integrase-LEDGF/p75 complex. Post-translationally, asymmetrically arginine dimethylated at one site by host PRMT6. Methylation impairs the RNA-binding activity and export of viral RNA from the nucleus to the cytoplasm. Phosphorylated by protein kinase CK2. Presence of, and maybe binding to the N-terminus of the regulatory beta subunit of CK2 is necessary for CK2-mediated Rev's phosphorylation.

It localises to the host nucleus. Its subcellular location is the host nucleolus. It is found in the host cytoplasm. Functionally, escorts unspliced or incompletely spliced viral pre-mRNAs (late transcripts) out of the nucleus of infected cells. These pre-mRNAs carry a recognition sequence called Rev responsive element (RRE) located in the env gene, that is not present in fully spliced viral mRNAs (early transcripts). This function is essential since most viral proteins are translated from unspliced or partially spliced pre-mRNAs which cannot exit the nucleus by the pathway used by fully processed cellular mRNAs. Rev itself is translated from a fully spliced mRNA that readily exits the nucleus. Rev's nuclear localization signal (NLS) binds directly to KPNB1/Importin beta-1 without previous binding to KPNA1/Importin alpha-1. KPNB1 binds to the GDP bound form of RAN (Ran-GDP) and targets Rev to the nucleus. In the nucleus, the conversion from Ran-GDP to Ran-GTP dissociates Rev from KPNB1 and allows Rev's binding to the RRE in viral pre-mRNAs. Rev multimerization on the RRE via cooperative assembly exposes its nuclear export signal (NES) to the surface. Rev can then form a complex with XPO1/CRM1 and Ran-GTP, leading to nuclear export of the complex. Conversion from Ran-GTP to Ran-GDP mediates dissociation of the Rev/RRE/XPO1/RAN complex, so that Rev can return to the nucleus for a subsequent round of export. Beside KPNB1, also seems to interact with TNPO1/Transportin-1, RANBP5/IPO5 and IPO7/RANBP7 for nuclear import. The nucleoporin-like HRB/RIP is an essential cofactor that probably indirectly interacts with Rev to release HIV RNAs from the perinuclear region to the cytoplasm. The chain is Protein Rev from Homo sapiens (Human).